The following is a 589-amino-acid chain: Ubiquilin-1 (589 aa).

Residues 1-11 show a composition bias toward gly residues; that stretch reads MAESGESGGPP. Disordered regions lie at residues 1–35 and 110–145; these read MAES…AEPK and NRPQ…ATSN. The residue at position 2 (Ala2) is an N-acetylalanine. A compositionally biased stretch (low complexity) spans 12–35; that stretch reads GSQDSAAGAEGAGAPAAAASAEPK. Residues 37-111 form the Ubiquitin-like domain; it reads MKVTVKTPKE…VHLVIKTQNR (75 aa). Polar residues predominate over residues 110–124; sequence NRPQDHSAQQTNTAG. The segment covering 125-145 has biased composition (low complexity); the sequence is SNVTTSSTPNSNSTSGSATSN. The segment at 178–428 is interaction with UBXN4; it reads QLLSNPEMMV…LNNPLFAGNP (251 aa). STI1 domains follow at residues 182-210 and 212-251; these read NPEM…QLIM and NPQM…MQEM. A disordered region spans residues 295 to 371; sequence PFASLVSNTS…NLVPGVGASM (77 aa). The span at 299-313 shows a compositional bias: polar residues; the sequence is LVSNTSSGEGSQPSR. Low complexity predominate over residues 327–360; it reads QTSQSSSASSGTASTVGGTTGSTASGTSGQSTTA. 2 consecutive STI1 domains span residues 387 to 434 and 438 to 470; these read NPQL…QEQM and LPTF…QQGL. The segment at 488–520 is disordered; it reads LGALGSTGGSSGTNGSNATPSENTSPTAGTTEP. The span at 489–499 shows a compositional bias: gly residues; that stretch reads GALGSTGGSSG. The span at 509 to 520 shows a compositional bias: polar residues; the sequence is ENTSPTAGTTEP. The UBA domain occupies 546-586; that stretch reads RFQQQLEQPSAMGFLNREANLQALIATGGDINAAIERLLGS.

As to quaternary structure, monomer and homodimer. Heterodimer with UBQLN2. Binds CD47, NBL1, GABRA1, GABRA2, GABRA3, GABRA6, GABRB1, GABRB2 and GABRB3. Binds UBE3A, BTRC, P4HB and MTOR. Interacts with the proteasome 19S subunit. Interacts (via ubiquitin-like domain) with TREX1; the interaction is direct and may control TREX1 subcellular location. Forms a complex with UBXN4 and VCP. Interacts (via UBA domain) with UBQLN4 (via ubiquitin-like domain). Found in a complex with UBQLN2 and MAP1LC3A/B/C. The monomeric form interacts with PSEN1 and PSEN2. Interacts with ORAI1. Interacts (via UBA domain) with TICAM1. Interacts with EPS15. Interacts (via UBA domain) with UBA52 and (via ubiquitin-like domain) with PSMD3 and PSMD4. Interacts with HERPUD1. Interacts with MAP1LC3A/B/C in the presence of UBQLN4. Interacts (via ubiquitin-like domain) with EPS15 (via UIM domains) and both the ubiquitinated and non-ubiquitinated forms can interact with EPS15. Interacts (via ubiquitin-like domain) with EPS15L1, HGS (via UIM domain) and STAM2 (via UIM domain). Interacts with BCL2L10/BCL-B; in the cytoplasm. Post-translationally, degraded during both macroautophagy and during chaperone-mediated autophagy (CMA). Phosphorylated. In terms of processing, ubiquitinated.

Its subcellular location is the nucleus. It is found in the cytoplasm. The protein resides in the endoplasmic reticulum. It localises to the cytoplasmic vesicle. The protein localises to the autophagosome. Its subcellular location is the cell membrane. Functionally, plays an important role in the regulation of different protein degradation mechanisms and pathways including ubiquitin-proteasome system (UPS), autophagy and endoplasmic reticulum-associated protein degradation (ERAD) pathway. Mediates the proteasomal targeting of misfolded or accumulated proteins for degradation by binding (via UBA domain) to their polyubiquitin chains and by interacting (via ubiquitin-like domain) with the subunits of the proteasome. Plays a role in the ERAD pathway via its interaction with ER-localized proteins UBXN4, VCP and HERPUD1 and may form a link between the polyubiquitinated ERAD substrates and the proteasome. Plays a role in unfolded protein response (UPR) by attenuating the induction of UPR-inducible genes, DDTI3/CHOP, HSPA5 and PDIA2 during ER stress. Involved in the regulation of macroautophagy and autophagosome formation; required for maturation of autophagy-related protein LC3 from the cytosolic form LC3-I to the membrane-bound form LC3-II and may assist in the maturation of autophagosomes to autolysosomes by mediating autophagosome-lysosome fusion. Negatively regulates the TICAM1/TRIF-dependent toll-like receptor signaling pathway by decreasing the abundance of TICAM1 via the autophagic pathway. Promotes the ubiquitination and lysosomal degradation of ORAI1, consequently down-regulating the ORAI1-mediated Ca2+ mobilization. Suppresses the maturation and proteasomal degradation of amyloid beta A4 protein (A4) by stimulating the lysine 63 (K63)-linked polyubiquitination. Delays the maturation of A4 by sequestering it in the Golgi apparatus and preventing its transport to the cell surface for subsequent processing. Ubiquitinates BCL2L10 and thereby stabilizes protein abundance. The protein is Ubiquilin-1 (UBQLN1) of Pongo abelii (Sumatran orangutan).